A 915-amino-acid chain; its full sequence is MAPPTPSPRPGPPPTPQAAMTTPLKTPASKHRLHFPAMTPRNGGGGGAAAGGTEHPVEVIGRIRNLAAGAGGASALEIAGGGTAVRVRGDAGGCRDFTLDGVSVSEEEDLEGFYRRFVRSRIEGVRVGAKCTVMVYGPTGSGKSHTMFGCAKQPGIVYRALRDILEGGGGGGGGVSGGGGEGDGRGEDDAGFGMGLFVQVAVLEIYNEEIYDLLVGSGANAKGNAPKARLEVMGKKAKNATYISGNEAGKISREVAKVEKRRIVKSTLCNERSSRSHCMIILDVPSVGGRLMLVDMAGSENIEAAGQTGFEAKMQTAKINQGNTALKRVVESIANGDSHVPFRDSKLTMLLQDSFEDDKSKILMILCASPDPKELHKTVSTLEYGAKAKCIIRAAHAATPRDKMSSEESSTMLNSRIVAMNQFIYNLQKENKLREKERNEAQSVLRKKEEELAQLRAKLKLIEGQGAAAKEEEINSKVMEKTQSLRTELMKMEEKMLRQQQELLALQQRLKEVEREKPVQQDIIGGRLLARLSEMSARADQSMSMDMSIDFDMGDQPAAQDVKVIKEDTRKQGQIWSQANTAGSCTSAVEQEDDVVRLSGYPEKVVLSTVFEEGDEEEDKDSGVEEEVCKEVVEESYVMQQPLAEPEDPATRNNRIQNIFRLCGNHRELAKKVQSPAKKAFGDENNEPAKQTFGDENKQQPAKRVFGDENKDPSAWGAIEPPMCDVRVTDSPVSSQLSPIVCQVVDDAKLPVSEQLKSCNALEAADENKENNASGQDGLLEVYIKWESGHLIKGLKLLSNSCLSDLRKLLEDHFEEAGSKQQQQFTFLLLGDPSGAPVSREKEAGVPISKLPSCNNQPNSYLACLRAVKKQPATEQMPFSPLESKLNSALNDVHLAALSPKVNPMSPNYIRELRA.

The segment covering 1-16 (MAPPTPSPRPGPPPTP) has biased composition (pro residues). Disordered regions lie at residues 1–28 (MAPP…KTPA) and 34–53 (HFPA…AGGT). In terms of domain architecture, Kinesin motor spans 56–391 (PVEVIGRIRN…LEYGAKAKCI (336 aa)). 137-144 (GPTGSGKS) is an ATP binding site. A coiled-coil region spans residues 426–517 (NLQKENKLRE…QRLKEVEREK (92 aa)). The interval 676–718 (PAKKAFGDENNEPAKQTFGDENKQQPAKRVFGDENKDPSAWGA) is disordered.

Belongs to the TRAFAC class myosin-kinesin ATPase superfamily. Kinesin family. KIN-10 subfamily.

The chain is Kinesin-like protein KIN-10A from Oryza sativa subsp. japonica (Rice).